The chain runs to 352 residues: Divinyl chlorophyll a/b light-harvesting protein PcbA (352 aa).

Transmembrane regions (helical) follow at residues 27-47, 90-110, 142-162, 203-223, 243-263, and 306-326; these read FIAAHVAHAGLIVFWAGAFTL, VLAIAIVHLVSSMVLAAGGLL, FILGHHLIILGFAVILLVEWA, VMGGHAFLAFVLITGGAWHIA, AVLSWSLAGIGWMAIIAAFWS, and LANVHYYFGFFFIQGHLWHAL.

Belongs to the PsbB/PsbC family. IsiA/Pcb subfamily. As to quaternary structure, the antenna complex consists of divinyl chlorophylls (a and b) and divinyl chlorophyll a/b binding proteins and binds less divinyl chlorophyll b than does low-light-adapted Prochlorococcus. Also forms complexes with PSII, consisting of a PSII dimer and 4 or 8 PcbA subunits. These complexes are also found under conditions of iron-starvation. Divinyl chlorophyll a serves as cofactor. The cofactor is divinyl chlorophyll b.

It is found in the cellular thylakoid membrane. In terms of biological role, the antenna complex functions as a light receptor, it captures and delivers excitation energy to photosystem II and possibly to photosystem I. The Prochlorales pcb genes are not related to higher plant LHCs. The polypeptide is Divinyl chlorophyll a/b light-harvesting protein PcbA (pcbA) (Prochlorococcus marinus subsp. pastoris (strain CCMP1986 / NIES-2087 / MED4)).